A 336-amino-acid chain; its full sequence is Large ribosomal subunit protein uL1 (336 aa).

A large ribosomal subunit protein uL1 region spans residues 1-245 (MANQKKVTNK…VKKTAKGKVI (245 aa)). Positions 246–336 (ADDSAKGENK…DVKKAKTSKK (91 aa)) are unknown. The tract at residues 267–336 (AQKKKPSKHP…DVKKAKTSKK (70 aa)) is disordered. The segment covering 286–305 (KKKKVKKILKKAKPAKKAAV) has biased composition (basic residues). Residues 306 to 315 (AKKPVVVNKK) show a composition bias toward low complexity.

It belongs to the universal ribosomal protein uL1 family. In terms of assembly, part of the 50S ribosomal subunit.

In terms of biological role, binds directly to 23S rRNA. The L1 stalk is quite mobile in the ribosome, and is involved in E site tRNA release. Functionally, protein L1 is also a translational repressor protein, it controls the translation of the L11 operon by binding to its mRNA. This chain is Large ribosomal subunit protein uL1, found in Malacoplasma penetrans (strain HF-2) (Mycoplasma penetrans).